Reading from the N-terminus, the 1034-residue chain is Vacuolar membrane protease (1034 aa).

Over 1 to 11 (MAVKNPFGFTT) the chain is Cytoplasmic. A helical membrane pass occupies residues 12 to 32 (GPVTFWLIVVYAAFLIPLVWI). Residues 33-418 (HESVPAVPSS…GFAILELRGL (386 aa)) lie on the Vacuolar side of the membrane. Asn-51 and Asn-141 each carry an N-linked (GlcNAc...) asparagine glycan. 2 residues coordinate Zn(2+): His-200 and Asp-212. Glu-246 (proton acceptor) is an active-site residue. Residues Glu-247, Glu-272, and His-345 each coordinate Zn(2+). A helical membrane pass occupies residues 419-439 (FAWTLTLLIVSPLVLALVTYI). Topologically, residues 440 to 470 (LSRKDKYYFFSRKVTADEDDEPVSVGGWKGF) are cytoplasmic. Residues 471–491 (FRFPFALVLSASITVLSAFLI) traverse the membrane as a helical segment. The Vacuolar portion of the chain corresponds to 492–497 (RRVNPH). The helical transmembrane segment at 498-518 (IIYSSPYAVWAMTLSLFFLVF) threads the bilayer. Over 519-536 (WTIAKGASVVRPSALQRG) the chain is Cytoplasmic. Residues 537 to 557 (YAHIWLFVISWVILVAVTAAA) form a helical membrane-spanning segment. Topologically, residues 558-567 (DRFKIASGYP) are vacuolar. The helical transmembrane segment at 568 to 588 (FAFFHSAVFVSALISLCDLFA) threads the bilayer. Residues 589-703 (LPSKQEFARN…NLPSWTWFFQ (115 aa)) are Cytoplasmic-facing. The tract at residues 623–653 (HSHVEDDVAEEPTETTPLRSGENGNGNNGTI) is disordered. A helical transmembrane segment spans residues 704-724 (LLLLAPITITVFLQIALFIVS). Topologically, residues 725–736 (AIHSAAADGNDP) are vacuolar. A helical membrane pass occupies residues 737–757 (ILVYAAIAAFSIIILLPATPF). At 758 to 762 (IHRAS) the chain is on the cytoplasmic side. Residues 763–783 (FYLPLFLLLVFFVTLIYNLVA) form a helical membrane-spanning segment. At 784-1034 (FPFSAENRLK…LVEGRKKFRA (251 aa)) the chain is on the vacuolar side. Residues Asn-805, Asn-866, and Asn-879 are each glycosylated (N-linked (GlcNAc...) asparagine).

This sequence belongs to the peptidase M28 family. Requires Zn(2+) as cofactor.

The protein localises to the vacuole membrane. In terms of biological role, may be involved in vacuolar sorting and osmoregulation. This Colletotrichum graminicola (strain M1.001 / M2 / FGSC 10212) (Maize anthracnose fungus) protein is Vacuolar membrane protease.